We begin with the raw amino-acid sequence, 450 residues long: Phosphoglucosamine mutase (450 aa).

Catalysis depends on Ser102, which acts as the Phosphoserine intermediate. Mg(2+)-binding residues include Ser102, Asp244, Asp246, and Asp248. Ser102 is modified (phosphoserine).

It belongs to the phosphohexose mutase family. The cofactor is Mg(2+). Activated by phosphorylation.

It catalyses the reaction alpha-D-glucosamine 1-phosphate = D-glucosamine 6-phosphate. Functionally, catalyzes the conversion of glucosamine-6-phosphate to glucosamine-1-phosphate. The chain is Phosphoglucosamine mutase from Nitratidesulfovibrio vulgaris (strain DSM 19637 / Miyazaki F) (Desulfovibrio vulgaris).